The chain runs to 209 residues: Casparian strip membrane protein 1 (209 aa).

A disordered region spans residues 1–35 (MKTGESTAIDIAPETNNSGPIGKKKSTTPLLAAPV). Over 1 to 46 (MKTGESTAIDIAPETNNSGPIGKKKSTTPLLAAPVPDRGTHRMKRG) the chain is Cytoplasmic. The helical transmembrane segment at 47-67 (LAIFDFVLRIGVLASALAAAA) threads the bilayer. Residues 68–96 (AMGTSEQTLPFFTQFFQFEASYDDLPTFQ) are Extracellular-facing. A helical membrane pass occupies residues 97-117 (FFVVAMAVVAGYVVLSIPFSI). At 118–129 (VCIIRPHAAGPR) the chain is on the cytoplasmic side. Residues 130–150 (VLLLILDSVALTLNTAAAGAA) traverse the membrane as a helical segment. Topologically, residues 151 to 182 (AAVVSLAHSGNSSTNWLAICNQFGDFCQQASG) are extracellular. Asparagine 161 carries an N-linked (GlcNAc...) asparagine glycan. A helical transmembrane segment spans residues 183–203 (AVVGSFAAVLLFLLLILFSAL). Topologically, residues 204-209 (SLKNSH) are cytoplasmic.

Belongs to the Casparian strip membrane proteins (CASP) family. As to quaternary structure, homodimer and heterodimers.

It is found in the cell membrane. Functionally, regulates membrane-cell wall junctions and localized cell wall deposition. Required for establishment of the Casparian strip membrane domain (CSD) and the subsequent formation of Casparian strips, a cell wall modification of the root endodermis that determines an apoplastic barrier between the intraorganismal apoplasm and the extraorganismal apoplasm and prevents lateral diffusion. In Cucumis melo (Muskmelon), this protein is Casparian strip membrane protein 1.